Reading from the N-terminus, the 706-residue chain is Polyribonucleotide nucleotidyltransferase (706 aa).

The Mg(2+) site is built by Asp-487 and Asp-493. The region spanning 553–612 (PRLFTMKISQDKIRDVIGKGGETIRSITAETGTEINIAEDGTITIAATTQEAGDAAKKRI) is the KH domain. An S1 motif domain is found at 622–692 (GKVYEGTVVK…DRGRVRLSIK (71 aa)).

The protein belongs to the polyribonucleotide nucleotidyltransferase family. Requires Mg(2+) as cofactor.

The protein resides in the cytoplasm. It catalyses the reaction RNA(n+1) + phosphate = RNA(n) + a ribonucleoside 5'-diphosphate. Its function is as follows. Involved in mRNA degradation. Catalyzes the phosphorolysis of single-stranded polyribonucleotides processively in the 3'- to 5'-direction. The protein is Polyribonucleotide nucleotidyltransferase of Neisseria gonorrhoeae (strain ATCC 700825 / FA 1090).